The following is a 156-amino-acid chain: Small ribosomal subunit protein uS7 (156 aa).

This sequence belongs to the universal ribosomal protein uS7 family. As to quaternary structure, part of the 30S ribosomal subunit. Contacts proteins S9 and S11.

One of the primary rRNA binding proteins, it binds directly to 16S rRNA where it nucleates assembly of the head domain of the 30S subunit. Is located at the subunit interface close to the decoding center, probably blocks exit of the E-site tRNA. The sequence is that of Small ribosomal subunit protein uS7 from Mycolicibacterium vanbaalenii (strain DSM 7251 / JCM 13017 / BCRC 16820 / KCTC 9966 / NRRL B-24157 / PYR-1) (Mycobacterium vanbaalenii).